A 202-amino-acid polypeptide reads, in one-letter code: Small ribosomal subunit protein uS4 (202 aa).

A compositionally biased stretch (basic residues) spans 1-13 (MSRYRGPRLRVTR). Residues 1-42 (MSRYRGPRLRVTRRLGELPGLTRKASKKSNPPGQHGQARRKR) are disordered. Residues 90 to 152 (NRLDNVCFRL…KASKKLVEGN (63 aa)) enclose the S4 RNA-binding domain.

It belongs to the universal ribosomal protein uS4 family. Part of the 30S ribosomal subunit. Contacts protein S5. The interaction surface between S4 and S5 is involved in control of translational fidelity.

One of the primary rRNA binding proteins, it binds directly to 16S rRNA where it nucleates assembly of the body of the 30S subunit. Its function is as follows. With S5 and S12 plays an important role in translational accuracy. The polypeptide is Small ribosomal subunit protein uS4 (Prochlorococcus marinus subsp. pastoris (strain CCMP1986 / NIES-2087 / MED4)).